The chain runs to 780 residues: Myosin heavy chain kinase C (780 aa).

Residues 40–243 (IGDDLKPKWT…VCDFLKLKPI (204 aa)) enclose the Alpha-type protein kinase domain. A disordered region spans residues 310–495 (RIRAQQQQKS…MEQTPDRSEF (186 aa)). Positions 337-350 (QQSPSSPTSKPVPQ) are enriched in low complexity. The span at 353-376 (KTPSQSNVVNKSPVSPPKENSNVK) shows a compositional bias: polar residues. Residues 380-436 (DNINNNNSSISSNNDNSNNNNNNNDNINNSSNSSSVNSNSSSVSSSSSSSSSSSSSS) show a composition bias toward low complexity. Polar residues predominate over residues 437–450 (TTNAAPISIQVSRN). The segment covering 458-488 (IQPSSAAASASSTSSSNVPTPESTSTSSMEQ) has biased composition (low complexity). WD repeat units lie at residues 507–546 (DTVR…HVTN), 549–589 (AHGK…TIKE), 591–628 (KESN…CVKT), 631–668 (GHTR…ILTN), 671–708 (GHEG…CVNT), and 748–780 (NTRS…WDKM).

This sequence belongs to the protein kinase superfamily. Alpha-type protein kinase family. ALPK subfamily. As to quaternary structure, interacts with myosin II heavy chain (mhcA). In terms of processing, autophosphorylated in vitro.

It localises to the cytoplasm. It is found in the cell cortex. The protein localises to the membrane. Its subcellular location is the cleavage furrow. The catalysed reaction is L-threonyl-[myosin heavy-chain] + ATP = O-phospho-L-threonyl-[myosin heavy-chain] + ADP + H(+). Phosphorylates threonine at 'Thr-1823', 'Thr-1833' and 'Thr-2029' in the C-terminal tail region of myosin II heavy chain (mhcA). This phosphorylation is critical in actin-activated ATPase activity of the myosin and regulating the assembly and disassembly of myosin II filament. In vitro, catalytic domain phosphorylates mhcA, myelin basic protein, myosin regulatory light chain, casein and caldesmon. Drives the disassembly of myosin II filaments for efficient cytokinesis and recycling of myosin II that occurs during late cytokinesis. Can be activated in vitro by autophosphorylation. In Dictyostelium discoideum (Social amoeba), this protein is Myosin heavy chain kinase C (mhkC).